The sequence spans 460 residues: V-type ATP synthase beta chain (460 aa).

It belongs to the ATPase alpha/beta chains family.

Functionally, produces ATP from ADP in the presence of a proton gradient across the membrane. The V-type beta chain is a regulatory subunit. The protein is V-type ATP synthase beta chain of Thermotoga neapolitana (strain ATCC 49049 / DSM 4359 / NBRC 107923 / NS-E).